The chain runs to 690 residues: MIRKEVDFGGRRLQLETGRMARQADGAVLVSSGDTVVLVTAVGRREMKPGQDFFPLTVNYQEKAYAAGKIPGGFFKREGRPTEKETLTSRLIDRPIRPLFPKGFMNEVQVIATVVSVDRDNDPDILALVGASAALAVSGIPFNGPIGAARVAYIDGKYVLNPSYAQLTTSQLDLVVAGTRQAVLMVESEAQQLSEEIMLEAVMFGHAQFQPVIETIEALAREAGKPRWEWVAPVADEALGVQVREKATPLLQEAYALTEKQARSKRLEDVQQAMAVEFGSDDAGRGDMVRGLLKKIETGIVRGRILDGAPRIDGRDSKTVRPITIEAGVLPRTHGSALFTRGETQALVVATLGTKGDEQIIDALQGESRDRFMLHYNFPPFSTGETGMVGSPKRREIGHGRLAKRAIAAVLPTDSEFPYSLRVVSEVLESNGSSSMATVCGASLALMDAGVPLKAPVAGVAMGLIKEGARFAVLTDILGDEDHLGDMDFKVAGTEQGVTALQMDIKIDGITREIMAQALQQALAGRLHILGLMNGVLSRGRGELSDYAPRIITIQINPDRIRDVIGPGGKVIRALTEETGATIDIQDNGTVTIASVDGEAGAAAKRRIELLTADVQVDTIYDGKVAKIMDFGAFVTILPGRDGLLHISQISNERVSDVHDHLKEGQAVRVKVLEVDRQGKIKLSMKDIPQ.

Residues Asp-482 and Asp-488 each coordinate Mg(2+). Residues 549 to 608 (PRIITIQINPDRIRDVIGPGGKVIRALTEETGATIDIQDNGTVTIASVDGEAGAAAKRRI) enclose the KH domain. One can recognise an S1 motif domain in the interval 618 to 686 (DTIYDGKVAK…RQGKIKLSMK (69 aa)).

It belongs to the polyribonucleotide nucleotidyltransferase family. In terms of assembly, component of the RNA degradosome, which is a multiprotein complex involved in RNA processing and mRNA degradation. It depends on Mg(2+) as a cofactor.

The protein localises to the cytoplasm. It carries out the reaction RNA(n+1) + phosphate = RNA(n) + a ribonucleoside 5'-diphosphate. Its function is as follows. Involved in mRNA degradation. Catalyzes the phosphorolysis of single-stranded polyribonucleotides processively in the 3'- to 5'-direction. In Acidithiobacillus ferrooxidans (strain ATCC 23270 / DSM 14882 / CIP 104768 / NCIMB 8455) (Ferrobacillus ferrooxidans (strain ATCC 23270)), this protein is Polyribonucleotide nucleotidyltransferase.